Reading from the N-terminus, the 179-residue chain is Large ribosomal subunit protein uL6 (179 aa).

The protein belongs to the universal ribosomal protein uL6 family. Part of the 50S ribosomal subunit.

Its function is as follows. This protein binds to the 23S rRNA, and is important in its secondary structure. It is located near the subunit interface in the base of the L7/L12 stalk, and near the tRNA binding site of the peptidyltransferase center. In Gemmatimonas aurantiaca (strain DSM 14586 / JCM 11422 / NBRC 100505 / T-27), this protein is Large ribosomal subunit protein uL6.